A 116-amino-acid chain; its full sequence is Large ribosomal subunit protein bL20c (116 aa).

It belongs to the bacterial ribosomal protein bL20 family.

The protein resides in the plastid. It is found in the chloroplast. Its function is as follows. Binds directly to 23S ribosomal RNA and is necessary for the in vitro assembly process of the 50S ribosomal subunit. It is not involved in the protein synthesizing functions of that subunit. This Marchantia polymorpha (Common liverwort) protein is Large ribosomal subunit protein bL20c (rpl20).